A 375-amino-acid polypeptide reads, in one-letter code: tRNA-specific 2-thiouridylase MnmA (375 aa).

Residues 8–15 (GLSGGVDS) and M34 contribute to the ATP site. Residues 104-106 (NPD) form an interaction with target base in tRNA region. Catalysis depends on C109, which acts as the Nucleophile. C109 and C208 form a disulfide bridge. Residue G134 participates in ATP binding. Residues 158–160 (KDQ) are interaction with tRNA. C208 serves as the catalytic Cysteine persulfide intermediate. Residues 321–322 (RY) are interaction with tRNA.

This sequence belongs to the MnmA/TRMU family.

The protein resides in the cytoplasm. It catalyses the reaction S-sulfanyl-L-cysteinyl-[protein] + uridine(34) in tRNA + AH2 + ATP = 2-thiouridine(34) in tRNA + L-cysteinyl-[protein] + A + AMP + diphosphate + H(+). Catalyzes the 2-thiolation of uridine at the wobble position (U34) of tRNA, leading to the formation of s(2)U34. The polypeptide is tRNA-specific 2-thiouridylase MnmA (Mycoplasma mycoides subsp. mycoides SC (strain CCUG 32753 / NCTC 10114 / PG1)).